A 137-amino-acid polypeptide reads, in one-letter code: Putative pre-16S rRNA nuclease (137 aa).

It belongs to the YqgF nuclease family.

It localises to the cytoplasm. In terms of biological role, could be a nuclease involved in processing of the 5'-end of pre-16S rRNA. This Buchnera aphidicola subsp. Baizongia pistaciae (strain Bp) protein is Putative pre-16S rRNA nuclease.